Consider the following 225-residue polypeptide: AA9 family lytic polysaccharide monooxygenase A (225 aa).

Positions 1-17 (MLTTTFALLTAALGVSA) are cleaved as a signal peptide. Residues histidine 18 and histidine 85 each contribute to the Cu(2+) site. 2 cysteine pairs are disulfide-bonded: cysteine 55-cysteine 173 and cysteine 143-cysteine 225. Residues histidine 159 and glutamine 168 each coordinate O2. A Cu(2+)-binding site is contributed by tyrosine 170.

The protein belongs to the polysaccharide monooxygenase AA9 family. Cu(2+) serves as cofactor.

The protein resides in the secreted. It carries out the reaction [(1-&gt;4)-beta-D-glucosyl]n+m + reduced acceptor + O2 = 4-dehydro-beta-D-glucosyl-[(1-&gt;4)-beta-D-glucosyl]n-1 + [(1-&gt;4)-beta-D-glucosyl]m + acceptor + H2O.. Its activity is regulated as follows. Is able to utilize various natural phenolic compounds as reducing agents. Most of these reducing agents are present in plants, either free or as lignin building blocks, such as sinapic acid, or as flavonoids such as catechin and dopamine. Phenolic compounds with 1,2-benzenediol and 1,2,3-benzenetriol moieties yield the highest release of oxidized and non-oxidized glucooligosaccharides from cellulose compared to monophenols or sulfur-containing compounds. Its function is as follows. Lytic polysaccharide monooxygenase (LPMO) that depolymerizes crystalline and amorphous polysaccharides via the oxidation of scissile alpha- or beta-(1-4)-glycosidic bonds, yielding C1 or C4 oxidation products. Catalysis by LPMOs requires the reduction of the active-site copper from Cu(II) to Cu(I) by a reducing agent and H(2)O(2) or O(2) as a cosubstrate. Shows oxidative cleavage of xylan in addition to cellulose. Shows a strong synergistic effect with endoglucanase I (EGI) with a 16-fold higher release of detected oligosaccharides. The chain is AA9 family lytic polysaccharide monooxygenase A from Thermothelomyces thermophilus (strain ATCC 42464 / BCRC 31852 / DSM 1799) (Sporotrichum thermophile).